The sequence spans 366 residues: Melatonin receptor type 1A (366 aa).

Residues 1 to 45 are Extracellular-facing; the sequence is MAGRLWGSPGGTPKGNGSSALLNVSQAAPGAGDGVRPRPSWLAAT. N-linked (GlcNAc...) asparagine glycosylation is found at Asn-16 and Asn-23. The helical transmembrane segment at 46–66 threads the bilayer; it reads LASILIFTIVVDIVGNLLVVL. At 67–79 the chain is on the cytoplasmic side; the sequence is SVYRNKKLRNAGN. Residues 80 to 100 form a helical membrane-spanning segment; it reads VFVVSLAVADLLVAVYPYPLA. At 101–118 the chain is on the extracellular side; it reads LASIVNNGWSLSSLHCQL. Cysteines 116 and 193 form a disulfide. Residues 119-139 traverse the membrane as a helical segment; it reads SGFLMGLSVIGSVFSITGIAI. Over 140-158 the chain is Cytoplasmic; it reads NRYCCICHSLRYGKLYSGT. Residues 159–179 form a helical membrane-spanning segment; the sequence is NSLCYVFLIWTLTLVAIVPNL. Residues 180 to 203 lie on the Extracellular side of the membrane; it reads CVGTLQYDPRIYSCTFTQSVSSAY. Residues 204–224 form a helical membrane-spanning segment; sequence TIAVVVFHFIVPMLVVVFCYL. The Cytoplasmic segment spans residues 225–256; it reads RIWALVLQVRWKVKPDNKPKLKPQDFRNFVTM. Residues 257–277 form a helical membrane-spanning segment; it reads FVVFVLFAICWAPLNFIGLVV. The Extracellular portion of the chain corresponds to 278–290; the sequence is ASDPASMAPRIPE. The helical transmembrane segment at 291-311 threads the bilayer; the sequence is WLFVASYYMAYFNSCLNAIIY. Over 312 to 366 the chain is Cytoplasmic; that stretch reads GLLNQNFRQEYRKIIVSLCTTKMFFVDSSNHVADRIKRKPSPLIANHNLIKVDSV.

The protein belongs to the G-protein coupled receptor 1 family.

It localises to the cell membrane. In terms of biological role, high affinity receptor for melatonin. Likely to mediate the reproductive and circadian actions of melatonin. The activity of this receptor is mediated by pertussis toxin sensitive G proteins that inhibit adenylate cyclase activity. Possibly involved in sleep induction, by melatonin activation of the potassium channel KCNMA1/BK and the dissociation of G-beta and G-gamma subunits, thereby decreasing synaptic transmission. The chain is Melatonin receptor type 1A (MTNR1A) from Ovis aries (Sheep).